The chain runs to 274 residues: ATP synthase subunit b 2 (274 aa).

A helical transmembrane segment spans residues 2 to 22; sequence HIDWFVLLAQLVNFLILIYLL.

The protein belongs to the ATPase B chain family. In terms of assembly, F-type ATPases have 2 components, F(1) - the catalytic core - and F(0) - the membrane proton channel. F(1) has five subunits: alpha(3), beta(3), gamma(1), delta(1), epsilon(1). F(0) has three main subunits: a(1), b(2) and c(10-14). The alpha and beta chains form an alternating ring which encloses part of the gamma chain. F(1) is attached to F(0) by a central stalk formed by the gamma and epsilon chains, while a peripheral stalk is formed by the delta and b chains.

It is found in the cell inner membrane. F(1)F(0) ATP synthase produces ATP from ADP in the presence of a proton or sodium gradient. F-type ATPases consist of two structural domains, F(1) containing the extramembraneous catalytic core and F(0) containing the membrane proton channel, linked together by a central stalk and a peripheral stalk. During catalysis, ATP synthesis in the catalytic domain of F(1) is coupled via a rotary mechanism of the central stalk subunits to proton translocation. Its function is as follows. Component of the F(0) channel, it forms part of the peripheral stalk, linking F(1) to F(0). This chain is ATP synthase subunit b 2, found in Syntrophus aciditrophicus (strain SB).